We begin with the raw amino-acid sequence, 265 residues long: Isoprenyl transferase 1 (265 aa).

Asp-43 is a catalytic residue. Asp-43 serves as a coordination point for Mg(2+). Residues 44 to 47 (GNRR), Trp-48, His-61, and 89 to 91 (STE) each bind substrate. The Proton acceptor role is filled by Asn-92. Substrate-binding positions include Arg-95, Arg-214, and 220–222 (RLS). Glu-233 contacts Mg(2+).

Belongs to the UPP synthase family. As to quaternary structure, homodimer. It depends on Mg(2+) as a cofactor.

In terms of biological role, catalyzes the condensation of isopentenyl diphosphate (IPP) with allylic pyrophosphates generating different type of terpenoids. This Corynebacterium diphtheriae (strain ATCC 700971 / NCTC 13129 / Biotype gravis) protein is Isoprenyl transferase 1.